Here is a 378-residue protein sequence, read N- to C-terminus: Carbazole 1,9a-dioxygenase, terminal oxygenase component CarAa (378 aa).

In terms of domain architecture, Rieske spans 29–135 (WYPVRLASEI…VEEAKGLIFV (107 aa)). The [2Fe-2S] cluster site is built by Cys-69, His-71, Cys-90, and His-93.

Homotrimer. Carbazole 1,9a-dioxygenase complex consists of a terminal oxygenase component CarAa, a ferredoxin reductase component fdr and a ferredoxin component CarAc. Requires [2Fe-2S] cluster as cofactor.

The enzyme catalyses 9H-carbazole + NADH + O2 + H(+) = 2'-aminobiphenyl-2,3-diol + NAD(+). It carries out the reaction 9H-carbazole + NADPH + O2 + H(+) = 2'-aminobiphenyl-2,3-diol + NADP(+). Functionally, part of the multicomponent carbazole 1,9a-dioxygenase (CARDO), that converts carbazole (CAR) into 2-aminobiphenyl-2,3-diol. Catalyzes the dioxygenation at the angular (C-9a) and adjacent (C-1) positions of carbazole to yield a highly unstable cis-hydrodiol intermediate which is spontaneously converted to 2-aminobiphenyl-2,3-diol. This chain is Carbazole 1,9a-dioxygenase, terminal oxygenase component CarAa (carAa), found in Sphingomonas sp.